The chain runs to 329 residues: MSIFLKNKQFENITSQEQTKNNYKQLINDIQTLKKDLNAIILAHYYQEPDIQDVADFLGDSLGLAREAAKTNADIIVFAGVHFMAETAKILNPEKMVLLPDLNAGCSLADSCPPEIFSEFKKAHSDHLVISYINCSASIKAMSDIICTSANAVDIVNKIPLTQPILFAPDQNLGRYVISKTGRDLLLWPGSCIVHETFSEKKIFEFQSLYPTAEVIAHPECEPTILKHANYIGSTTSLLQYVKNSKKTTFIVITEPGIIHQMKKSCPEKQFLALPTVSGCACNECPHMRLNTLEKLYLAMKTRSPQIEIPESILLNAKKPIERMLEMSN.

Iminosuccinate is bound by residues H44 and S61. [4Fe-4S] cluster is bound at residue C106. Residues 132–134 (YIN) and S149 contribute to the iminosuccinate site. C192 is a binding site for [4Fe-4S] cluster. Iminosuccinate contacts are provided by residues 218 to 220 (HPE) and T235. C285 is a [4Fe-4S] cluster binding site.

It belongs to the quinolinate synthase family. Type 2 subfamily. [4Fe-4S] cluster is required as a cofactor.

Its subcellular location is the plastid. It localises to the cyanelle. The enzyme catalyses iminosuccinate + dihydroxyacetone phosphate = quinolinate + phosphate + 2 H2O + H(+). Its pathway is cofactor biosynthesis; NAD(+) biosynthesis; quinolinate from iminoaspartate: step 1/1. Catalyzes the condensation of iminoaspartate with dihydroxyacetone phosphate to form quinolinate. This is Quinolinate synthase from Cyanophora paradoxa.